The sequence spans 318 residues: uncharacterized protein (318 aa).

The protein to A.aeolicus AA07 and AA11.

This is an uncharacterized protein from Aquifex aeolicus (strain VF5).